Reading from the N-terminus, the 197-residue chain is Large ribosomal subunit protein uL13C (197 aa).

The protein belongs to the universal ribosomal protein uL13 family. In terms of assembly, component of the large ribosomal subunit (LSU). Mature yeast ribosomes consist of a small (40S) and a large (60S) subunit. The 40S small subunit contains 1 molecule of ribosomal RNA (18S rRNA) and at least 33 different proteins. The large 60S subunit contains 3 rRNA molecules (25S, 5.8S and 5S rRNA) and at least 46 different proteins.

It localises to the cytoplasm. It is found in the nucleus. Its subcellular location is the nucleolus. Functionally, component of the ribosome, a large ribonucleoprotein complex responsible for the synthesis of proteins in the cell. The small ribosomal subunit (SSU) binds messenger RNAs (mRNAs) and translates the encoded message by selecting cognate aminoacyl-transfer RNA (tRNA) molecules. The large subunit (LSU) contains the ribosomal catalytic site termed the peptidyl transferase center (PTC), which catalyzes the formation of peptide bonds, thereby polymerizing the amino acids delivered by tRNAs into a polypeptide chain. The nascent polypeptides leave the ribosome through a tunnel in the LSU and interact with protein factors that function in enzymatic processing, targeting, and the membrane insertion of nascent chains at the exit of the ribosomal tunnel. In Schizosaccharomyces pombe (strain 972 / ATCC 24843) (Fission yeast), this protein is Large ribosomal subunit protein uL13C (rpl1603).